A 134-amino-acid polypeptide reads, in one-letter code: Small ribosomal subunit protein uS8 (134 aa).

Belongs to the universal ribosomal protein uS8 family. As to quaternary structure, part of the 30S ribosomal subunit. Contacts proteins S5 and S12.

In terms of biological role, one of the primary rRNA binding proteins, it binds directly to 16S rRNA central domain where it helps coordinate assembly of the platform of the 30S subunit. This chain is Small ribosomal subunit protein uS8, found in Thermotoga sp. (strain RQ2).